The following is a 185-amino-acid chain: Elongation factor P 1 (185 aa).

Belongs to the elongation factor P family.

The protein localises to the cytoplasm. The protein operates within protein biosynthesis; polypeptide chain elongation. In terms of biological role, involved in peptide bond synthesis. Stimulates efficient translation and peptide-bond synthesis on native or reconstituted 70S ribosomes in vitro. Probably functions indirectly by altering the affinity of the ribosome for aminoacyl-tRNA, thus increasing their reactivity as acceptors for peptidyl transferase. The chain is Elongation factor P 1 (efp1) from Chlamydia muridarum (strain MoPn / Nigg).